The chain runs to 1732 residues: Polycystin-1-like protein 3 (1732 aa).

A signal peptide spans 1–23 (MFFKGGSWLWLYIRTSIILGSEL). Residues 24-697 (NSPAPHGQNN…IKLFLRVTNN (674 aa)) are Extracellular-facing. Positions 30-138 (GQNNCYQLNR…CLLKYYFICQ (109 aa)) constitute a C-type lectin domain. 2 disulfide bridges follow: C51-C137 and C112-C129. N-linked (GlcNAc...) asparagine glycosylation is found at N286, N363, N515, N537, and N575. The 163-residue stretch at 523 to 685 (TSLNMSTHQL…FVVPRTVNVE (163 aa)) folds into the GAIN-B domain. 2 cysteine pairs are disulfide-bonded: C635-C663 and C650-C665. The interval 635–685 (CYYWEIHNQTWSSAGCQVGPQSTILRTQCLCNHLTFFASDFFVVPRTVNVE) is GPS. A helical membrane pass occupies residues 698–718 (PVGVSLLASLLGFYVITVVWA). Residues 719-905 (RKKDQADMQK…PWNQFTRVQR (187 aa)) are Cytoplasmic-facing. The 118-residue stretch at 743-860 (FHYLIQVYTG…GDCELDRVFI (118 aa)) folds into the PLAT domain. Residues 906–926 (LSCCMTLLLCNMVINVMFWKI) form a helical membrane-spanning segment. Residues 927-939 (NSTTAKRDEQMRP) lie on the Extracellular side of the membrane. A helical membrane pass occupies residues 940–960 (FAVAWSELLVSIHTAVILFPI). Over 961–1154 (NLVIGRLFPL…ISNGLSKWLT (194 aa)) the chain is Cytoplasmic. A helical membrane pass occupies residues 1155–1175 (SVCWLLLGFTSLASAFFTALY). Over 1176–1198 (SLELSKDQATSWMISIILSVLQN) the chain is Extracellular. A helical membrane pass occupies residues 1199–1219 (IFISQPVKVVFFTFLYSLMMS). The Cytoplasmic segment spans residues 1220-1289 (RMPRLNKENE…KLTGDILVQI (70 aa)). Residues 1290–1300 (LFLTLLMTAIY) form a helical membrane-spanning segment. The Extracellular segment spans residues 1301 to 1461 (SAKNSNRFYL…SFTSLQMSKK (161 aa)). The helical transmembrane segment at 1462–1491 (GCVWSIISQVIYYLLVCYYAFIQGCQLKQQ) threads the bilayer. Residues 1492 to 1500 (KWRFFTGKR) lie on the Cytoplasmic side of the membrane. The chain crosses the membrane as a helical span at residues 1501–1519 (NILDTSIILISFILLGLDM). The Extracellular portion of the chain corresponds to 1520–1550 (KSISLHKKNMARYRDDQDRFISFYEAVKVNS). Residues 1551–1572 (AATHLVGFPVLLATVQLWNLLR) form a helical membrane-spanning segment. The Cytoplasmic segment spans residues 1573–1589 (HSPRLRVISRTLSRAWD). Residues 1590–1614 (EVVGFLLIILILLTGYAIAFNLLFG) form a helical membrane-spanning segment. The channel pore-region stretch occupies residues 1613 to 1651 (FGCSISDYRTFFSSAVTVVGLLMGISHQEEVFALDPVLG). At 1615-1647 (CSISDYRTFFSSAVTVVGLLMGISHQEEVFALD) the chain is on the extracellular side. The helical transmembrane segment at 1648–1667 (PVLGTFLILTSVILMVLVVI) threads the bilayer. Residues 1668 to 1732 (NLFVSAILMA…SDTEVLDELP (65 aa)) are Cytoplasmic-facing.

The protein belongs to the polycystin family. Heterotetramer with PKD2L1, composed of 3 subunit of PKD2L1 and 1 subunit of PKD1L3. Post-translationally, autoproteolytically processed at the GPS region of the GAIN-B domain; this cleavage modulates receptor activity. Highly expressed in placenta, weakly in heart and lung.

Its subcellular location is the cell membrane. The catalysed reaction is Ca(2+)(in) = Ca(2+)(out). It catalyses the reaction Na(+)(in) = Na(+)(out). The enzyme catalyses K(+)(in) = K(+)(out). It carries out the reaction Mg(2+)(in) = Mg(2+)(out). The non-selective cation channel is gated following an off-response property by acid: gated open after the removal of acid stimulus, but not during acid application. Regulation of non-selective cation channel activity by external Ca(2+) is bimodal, first sensitizing and subsequently inactivating the current. Functionally, pore-forming subunit of a heterotetrameric, non-selective cation channel that is permeable to Ca(2+). Also shows permeability towards NA(1+), K(+) and Mg(2+). Heterotetrameric complex channel is activated by external low pH and Ca(2+), but opens only when the extracellular pH rises again and after the removal of acid stimulus. May act as a sour taste receptor in gustatory cells; however, its contribution to sour taste perception is unclear in vivo and may be indirect. This chain is Polycystin-1-like protein 3, found in Homo sapiens (Human).